Consider the following 342-residue polypeptide: Cystein proteinase inhibitor protein salarin (342 aa).

Positions 1–19 are cleaved as a signal peptide; sequence MKSLVLLLLVAVTVSSVVS. A glycan (N-linked (GlcNAc) asparagine) is linked at Asn-153. Thr-184 carries O-linked (GlcNAc) threonine glycosylation.

N-glycosylated, with sialylated biantennary complex-type glycans. In terms of processing, O-glycosylated, with sialylated oligosaccharides. As to expression, expressed in the skin, liver. intestine, spleen, pancreas and kidney.

The protein resides in the cytoplasm. It localises to the vacuole. In terms of biological role, inhibits papain and ficin (cysteine proteinases) but not trypsin (a serine proteinase). The sequence is that of Cystein proteinase inhibitor protein salarin (salarin) from Salmo salar (Atlantic salmon).